The sequence spans 244 residues: Phosphoadenosine 5'-phosphosulfate reductase (244 aa).

The Nucleophile; cysteine thiosulfonate intermediate role is filled by Cys-239.

It belongs to the PAPS reductase family. CysH subfamily.

The protein resides in the cytoplasm. It catalyses the reaction [thioredoxin]-disulfide + sulfite + adenosine 3',5'-bisphosphate + 2 H(+) = [thioredoxin]-dithiol + 3'-phosphoadenylyl sulfate. It functions in the pathway sulfur metabolism; hydrogen sulfide biosynthesis; sulfite from sulfate: step 3/3. Functionally, catalyzes the formation of sulfite from phosphoadenosine 5'-phosphosulfate (PAPS) using thioredoxin as an electron donor. The sequence is that of Phosphoadenosine 5'-phosphosulfate reductase from Yersinia enterocolitica serotype O:8 / biotype 1B (strain NCTC 13174 / 8081).